The sequence spans 413 residues: Gamma-glutamyl phosphate reductase (413 aa).

The protein belongs to the gamma-glutamyl phosphate reductase family.

The protein localises to the cytoplasm. The catalysed reaction is L-glutamate 5-semialdehyde + phosphate + NADP(+) = L-glutamyl 5-phosphate + NADPH + H(+). Its pathway is amino-acid biosynthesis; L-proline biosynthesis; L-glutamate 5-semialdehyde from L-glutamate: step 2/2. Functionally, catalyzes the NADPH-dependent reduction of L-glutamate 5-phosphate into L-glutamate 5-semialdehyde and phosphate. The product spontaneously undergoes cyclization to form 1-pyrroline-5-carboxylate. The chain is Gamma-glutamyl phosphate reductase from Lactococcus lactis subsp. lactis (strain IL1403) (Streptococcus lactis).